Reading from the N-terminus, the 512-residue chain is UDP-N-acetylmuramate--L-alanine ligase (512 aa).

Glycine 132–threonine 138 is an ATP binding site.

Belongs to the MurCDEF family.

Its subcellular location is the cytoplasm. It carries out the reaction UDP-N-acetyl-alpha-D-muramate + L-alanine + ATP = UDP-N-acetyl-alpha-D-muramoyl-L-alanine + ADP + phosphate + H(+). Its pathway is cell wall biogenesis; peptidoglycan biosynthesis. Cell wall formation. This is UDP-N-acetylmuramate--L-alanine ligase from Bifidobacterium longum subsp. infantis (strain ATCC 15697 / DSM 20088 / JCM 1222 / NCTC 11817 / S12).